The primary structure comprises 277 residues: 4-hydroxybenzoate octaprenyltransferase (277 aa).

Helical transmembrane passes span 24–44 (FAAA…LGVI), 81–101 (VEAK…DLSL), 102–122 (NQYA…YPFM), 129–149 (PQVV…GAVI), 152–172 (LPLT…AYDT), 201–221 (IIAL…WLSE), 224–244 (IGYF…CWLT), and 255–275 (AFLN…VGIY).

Belongs to the UbiA prenyltransferase family. The cofactor is Mg(2+).

The protein localises to the cell inner membrane. The catalysed reaction is all-trans-octaprenyl diphosphate + 4-hydroxybenzoate = 4-hydroxy-3-(all-trans-octaprenyl)benzoate + diphosphate. It functions in the pathway cofactor biosynthesis; ubiquinone biosynthesis. Catalyzes the prenylation of para-hydroxybenzoate (PHB) with an all-trans polyprenyl group. Mediates the second step in the final reaction sequence of ubiquinone-8 (UQ-8) biosynthesis, which is the condensation of the polyisoprenoid side chain with PHB, generating the first membrane-bound Q intermediate 3-octaprenyl-4-hydroxybenzoate. The chain is 4-hydroxybenzoate octaprenyltransferase from Haemophilus ducreyi (strain 35000HP / ATCC 700724).